We begin with the raw amino-acid sequence, 571 residues long: Proline--tRNA ligase (571 aa).

Belongs to the class-II aminoacyl-tRNA synthetase family. ProS type 1 subfamily. In terms of assembly, homodimer.

It is found in the cytoplasm. It carries out the reaction tRNA(Pro) + L-proline + ATP = L-prolyl-tRNA(Pro) + AMP + diphosphate. In terms of biological role, catalyzes the attachment of proline to tRNA(Pro) in a two-step reaction: proline is first activated by ATP to form Pro-AMP and then transferred to the acceptor end of tRNA(Pro). As ProRS can inadvertently accommodate and process non-cognate amino acids such as alanine and cysteine, to avoid such errors it has two additional distinct editing activities against alanine. One activity is designated as 'pretransfer' editing and involves the tRNA(Pro)-independent hydrolysis of activated Ala-AMP. The other activity is designated 'posttransfer' editing and involves deacylation of mischarged Ala-tRNA(Pro). The misacylated Cys-tRNA(Pro) is not edited by ProRS. The protein is Proline--tRNA ligase of Mannheimia succiniciproducens (strain KCTC 0769BP / MBEL55E).